Reading from the N-terminus, the 456-residue chain is Bifunctional protein GlmU (456 aa).

A pyrophosphorylase region spans residues 1–229; sequence MTKKALSAVI…VMEVEGANNR (229 aa). Residues 11–14, Lys25, Gln76, 81–82, 103–105, Gly140, Glu154, Asn169, and Asn227 contribute to the UDP-N-acetyl-alpha-D-glucosamine site; these read LAAG, GT, and YGD. A Mg(2+)-binding site is contributed by Asp105. A Mg(2+)-binding site is contributed by Asn227. The interval 230–250 is linker; the sequence is LQLAALERYLQNKQASKLLLE. The segment at 251 to 456 is N-acetyltransferase; that stretch reads GVMIYDPARF…QGWQRPIKKK (206 aa). The UDP-N-acetyl-alpha-D-glucosamine site is built by Arg333 and Lys351. The active-site Proton acceptor is His363. UDP-N-acetyl-alpha-D-glucosamine contacts are provided by Tyr366 and Asn377. Acetyl-CoA contacts are provided by residues Ala380, 386–387, Ser405, Ala423, and Arg440; that span reads NY.

The protein in the N-terminal section; belongs to the N-acetylglucosamine-1-phosphate uridyltransferase family. It in the C-terminal section; belongs to the transferase hexapeptide repeat family. Homotrimer. Mg(2+) serves as cofactor.

The protein resides in the cytoplasm. The catalysed reaction is alpha-D-glucosamine 1-phosphate + acetyl-CoA = N-acetyl-alpha-D-glucosamine 1-phosphate + CoA + H(+). It carries out the reaction N-acetyl-alpha-D-glucosamine 1-phosphate + UTP + H(+) = UDP-N-acetyl-alpha-D-glucosamine + diphosphate. Its pathway is nucleotide-sugar biosynthesis; UDP-N-acetyl-alpha-D-glucosamine biosynthesis; N-acetyl-alpha-D-glucosamine 1-phosphate from alpha-D-glucosamine 6-phosphate (route II): step 2/2. It functions in the pathway nucleotide-sugar biosynthesis; UDP-N-acetyl-alpha-D-glucosamine biosynthesis; UDP-N-acetyl-alpha-D-glucosamine from N-acetyl-alpha-D-glucosamine 1-phosphate: step 1/1. The protein operates within bacterial outer membrane biogenesis; LPS lipid A biosynthesis. Catalyzes the last two sequential reactions in the de novo biosynthetic pathway for UDP-N-acetylglucosamine (UDP-GlcNAc). The C-terminal domain catalyzes the transfer of acetyl group from acetyl coenzyme A to glucosamine-1-phosphate (GlcN-1-P) to produce N-acetylglucosamine-1-phosphate (GlcNAc-1-P), which is converted into UDP-GlcNAc by the transfer of uridine 5-monophosphate (from uridine 5-triphosphate), a reaction catalyzed by the N-terminal domain. This is Bifunctional protein GlmU from Haemophilus influenzae (strain PittEE).